Reading from the N-terminus, the 323-residue chain is Aquaporin-4 (323 aa).

Over 1–36 (MSDRPTARRWGKCGPLCTRENIMVAFKGVWTQAFWK) the chain is Cytoplasmic. 2 S-palmitoyl cysteine lipidation sites follow: Cys-13 and Cys-17. A helical transmembrane segment spans residues 37-57 (AVTAEFLAMLIFVLLSLGSTI). Over 58-69 (NWGGTEKPLPVD) the chain is Extracellular. A helical transmembrane segment spans residues 70-89 (MVLISLCFGLSIATMVQCFG). Topologically, residues 90–93 (HISG) are cytoplasmic. Positions 94–101 (GHINPAVT) form an intramembrane region, discontinuously helical. The short motif at 97-99 (NPA) is the NPA 1 element. Topologically, residues 102–115 (VAMVCTRKISIAKS) are cytoplasmic. Ser-111 carries the post-translational modification Phosphoserine; by PKG. The chain crosses the membrane as a helical span at residues 116 to 136 (VFYIAAQCLGAIIGAGILYLV). Residues 137 to 155 (TPPSVVGGLGVTMVHGNLT) lie on the Extracellular side of the membrane. Asn-153 is a glycosylation site (N-linked (GlcNAc...) asparagine). The chain crosses the membrane as a helical span at residues 156 to 176 (AGHGLLVELIITFQLVFTIFA). Topologically, residues 177–184 (SCDSKRTD) are cytoplasmic. Ser-180 carries the phosphoserine; by PKC modification. The chain crosses the membrane as a helical span at residues 185–205 (VTGSIALAIGFSVAIGHLFAI). An N-linked (GlcNAc...) asparagine glycan is attached at Asn-206. The Extracellular segment spans residues 206–208 (NYT). Residues 209 to 222 (GASMNPARSFGPAV) constitute an intramembrane region (discontinuously helical). The short motif at 213–215 (NPA) is the NPA 2 element. At 223–231 (IMGNWENHW) the chain is on the extracellular side. Residues 232–252 (IYWVGPIIGAVLAGGLYEYVF) traverse the membrane as a helical segment. Over 253-323 (CPDVEFKRRF…DQSGEVLSSV (71 aa)) the chain is Cytoplasmic. Phosphoserine occurs at positions 276 and 285. Thr-289 carries the phosphothreonine modification. Ser-321 bears the Phosphoserine mark.

Belongs to the MIP/aquaporin (TC 1.A.8) family. As to quaternary structure, homotetramer. The tetramers can form oligomeric arrays in membranes. The size of the oligomers differs between tissues and is smaller in skeletal muscle than in brain. Interaction between AQP4 oligomeric arrays in close-by cells can contribute to cell-cell adhesion. Part of a complex containing MLC1, TRPV4, HEPACAM and ATP1B1. Post-translationally, phosphorylation by PKC at Ser-180 reduces conductance by 50%. Phosphorylation by PKG at Ser-111 in response to glutamate increases conductance by 40%. Isoform 2: Palmitoylated on its N-terminal region. Isoform 1: Not palmitoylated. Detected in skeletal muscle. Detected in stomach, along the glandular base region of the fundic gland (at protein level). Detected in brain, lung and skeletal muscle, and at much lower levels in heart and ovary.

The protein localises to the cell membrane. Its subcellular location is the basolateral cell membrane. It is found in the endosome membrane. It localises to the sarcolemma. The protein resides in the cell projection. It carries out the reaction H2O(in) = H2O(out). Its function is as follows. Forms a water-specific channel. Plays an important role in brain water homeostasis. It is involved in glymphatic solute transport and is required for a normal rate of water exchange across the blood brain interface. Required for normal levels of cerebrospinal fluid influx into the brain cortex and parenchyma along paravascular spaces that surround penetrating arteries, and for normal drainage of interstitial fluid along paravenous drainage pathways. Thereby, it is required for normal clearance of solutes from the brain interstitial fluid, including soluble beta-amyloid peptides derived from APP. Plays a redundant role in urinary water homeostasis and urinary concentrating ability. The chain is Aquaporin-4 (AQP4) from Homo sapiens (Human).